Reading from the N-terminus, the 139-residue chain is D-ribose pyranase (139 aa).

Catalysis depends on His-20, which acts as the Proton donor. Residues Asp-28, His-106, and 128–130 contribute to the substrate site; that span reads FAN.

This sequence belongs to the RbsD / FucU family. RbsD subfamily. Homodecamer.

Its subcellular location is the cytoplasm. The enzyme catalyses beta-D-ribopyranose = beta-D-ribofuranose. Its pathway is carbohydrate metabolism; D-ribose degradation; D-ribose 5-phosphate from beta-D-ribopyranose: step 1/2. Its function is as follows. Catalyzes the interconversion of beta-pyran and beta-furan forms of D-ribose. This chain is D-ribose pyranase, found in Yersinia pseudotuberculosis serotype O:1b (strain IP 31758).